The chain runs to 131 residues: Small ribosomal subunit protein uS8 (131 aa).

It belongs to the universal ribosomal protein uS8 family. Part of the 30S ribosomal subunit. Contacts proteins S5 and S12.

Functionally, one of the primary rRNA binding proteins, it binds directly to 16S rRNA central domain where it helps coordinate assembly of the platform of the 30S subunit. This chain is Small ribosomal subunit protein uS8, found in Pelagibacter ubique (strain HTCC1062).